Reading from the N-terminus, the 132-residue chain is Homeobox protein HD-4 (132 aa).

Residues 29–88 constitute a DNA-binding region (homeobox); the sequence is GLSGYRYKTHIQVYVLTKIFEITQYPSHDTRQNLAILLNMSPRTIQIWFQNSRSVSRGAA. The interval 82–101 is disordered; that stretch reads SVSRGAAKKKVSKDNGPQEA.

The protein localises to the nucleus. The chain is Homeobox protein HD-4 (HD-4) from Encephalitozoon cuniculi (strain GB-M1) (Microsporidian parasite).